Here is a 576-residue protein sequence, read N- to C-terminus: MDSVAFEDVSVSFSQEEWALLAPSQKKLYRDVMQETFKNLASIGEKWEDPNVEDQHKNQGRNLRSHTGERLCEGKEGSQCAENFSPNLSVTKKTAGVKPYECTICGKAFMRLSSLTRHMRSHTGYELFEKPYKCKECEKAFSYLKSFQRHERSHTGEKPYKCKQCGKTFIYHQPFQRHERTHIGEKPYECKQCGKALSCSSSLRVHERIHTGEKPYECKQCGKAFSCSSSIRVHERTHTGEKPYACKECGKAFISHTSVLTHMITHNGDRPYKCKECGKAFIFPSFLRVHERIHTGEKPYKCKQCGKAFRCSTSIQIHERIHTGEKPYKCKECGKSFSARPAFRVHVRVHTGEKPYKCKECGKAFSRISYFRIHERTHTGEKPYECKKCGKTFNYPLDLKIHKRNHTGEKPYECKECAKTFISLENFRRHMITHTGDGPYKCRDCGKVFIFPSALRTHERTHTGEKPYECKQCGKAFSCSSYIRIHKRTHTGEKPYECKECGKAFIYPTSFQGHMRMHTGEKPYKCKECGKAFSLHSSFQRHTRIHNYEKPLECKQCGKAFSVSTSLKKHMRMHNR.

The KRAB domain occupies 4 to 90 (VAFEDVSVSF…AENFSPNLSV (87 aa)). 17 consecutive C2H2-type zinc fingers follow at residues 100-122 (YECT…MRSH), 132-154 (YKCK…ERSH), 160-182 (YKCK…ERTH), 188-210 (YECK…ERIH), 216-238 (YECK…ERTH), 244-266 (YACK…MITH), 272-294 (YKCK…ERIH), 300-322 (YKCK…ERIH), 328-350 (YKCK…VRVH), 356-378 (YKCK…ERTH), 384-406 (YECK…KRNH), 412-434 (YECK…MITH), 440-462 (YKCR…ERTH), 468-490 (YECK…KRTH), 496-518 (YECK…MRMH), 524-546 (YKCK…TRIH), and 552-574 (LECK…MRMH).

It belongs to the krueppel C2H2-type zinc-finger protein family.

It localises to the nucleus. May be involved in transcriptional regulation. The polypeptide is Zinc finger protein 791 (ZNF791) (Homo sapiens (Human)).